We begin with the raw amino-acid sequence, 224 residues long: ATP-dependent dethiobiotin synthetase BioD (224 aa).

ATP is bound at residue 12 to 17 (GVGKTF). Thr16 lines the Mg(2+) pocket. Residue Lys37 is part of the active site. Residue Thr41 coordinates substrate. ATP is bound by residues Asn52, 107-110 (EGAG), 167-168 (GS), 197-199 (PEG), and Glu204. Mg(2+) is bound by residues Asn52 and Glu107.

It belongs to the dethiobiotin synthetase family. In terms of assembly, homodimer. The cofactor is Mg(2+).

The protein localises to the cytoplasm. The catalysed reaction is (7R,8S)-7,8-diammoniononanoate + CO2 + ATP = (4R,5S)-dethiobiotin + ADP + phosphate + 3 H(+). It functions in the pathway cofactor biosynthesis; biotin biosynthesis; biotin from 7,8-diaminononanoate: step 1/2. Functionally, catalyzes a mechanistically unusual reaction, the ATP-dependent insertion of CO2 between the N7 and N8 nitrogen atoms of 7,8-diaminopelargonic acid (DAPA, also called 7,8-diammoniononanoate) to form a ureido ring. The chain is ATP-dependent dethiobiotin synthetase BioD from Corynebacterium glutamicum (strain ATCC 13032 / DSM 20300 / JCM 1318 / BCRC 11384 / CCUG 27702 / LMG 3730 / NBRC 12168 / NCIMB 10025 / NRRL B-2784 / 534).